Consider the following 178-residue polypeptide: Large ribosomal subunit protein uL5 (178 aa).

This sequence belongs to the universal ribosomal protein uL5 family. Part of the 50S ribosomal subunit; part of the 5S rRNA/L5/L18/L25 subcomplex. Contacts the 5S rRNA and the P site tRNA. Forms a bridge to the 30S subunit in the 70S ribosome.

In terms of biological role, this is one of the proteins that bind and probably mediate the attachment of the 5S RNA into the large ribosomal subunit, where it forms part of the central protuberance. In the 70S ribosome it contacts protein S13 of the 30S subunit (bridge B1b), connecting the 2 subunits; this bridge is implicated in subunit movement. Contacts the P site tRNA; the 5S rRNA and some of its associated proteins might help stabilize positioning of ribosome-bound tRNAs. The chain is Large ribosomal subunit protein uL5 from Wigglesworthia glossinidia brevipalpis.